The primary structure comprises 773 residues: Glucan endo-1,3-beta-D-glucosidase (773 aa).

Residues 1–194 (MPPGAKVPQA…KNYFSIAVLP (194 aa)) are beta-sandwich subdomain. Residues 1–647 (MPPGAKVPQA…HWICNLDSLG (647 aa)) enclose the GH81 domain. Positions 31, 34, 35, 36, and 89 each coordinate Mg(2+). Residues 195 to 288 (DNTVSTLTYY…QGTSFKTVYR (94 aa)) are alpha/beta subdomain. The interval 298–647 (DKGTYDREAL…HWICNLDSLG (350 aa)) is (alpha/beta)6 barrel subdomain. (1,3-beta-D-glucosyl)n-binding residues include Y327 and K331. 4 residues coordinate Ca(2+): D365, T368, E373, and K376. Residues D402 and H406 each coordinate (1,3-beta-D-glucosyl)n. The active site involves D402. Positions 454, 455, and 457 each coordinate Ca(2+). (1,3-beta-D-glucosyl)n-binding residues include N477, E479, and E483. Active-site residues include E479 and E483. K527, K618, N619, and W621 together coordinate Mg(2+). 12 residues coordinate Ca(2+): D712, N714, D716, G717, K718, D723, D748, I749, N750, D752, K754, and D759.

It belongs to the glycosyl hydrolase 81 family. It depends on Ca(2+) as a cofactor. Mg(2+) is required as a cofactor.

Its subcellular location is the secreted. The enzyme catalyses Hydrolysis of (1-&gt;3)-beta-D-glucosidic linkages in (1-&gt;3)-beta-D-glucans.. Inhibited by manganese, zinc, and copper ions. Functionally, cleaves internal linkages in 1,3-beta-glucan. May contribute to plant biomass degradation. This Acetivibrio thermocellus (strain ATCC 27405 / DSM 1237 / JCM 9322 / NBRC 103400 / NCIMB 10682 / NRRL B-4536 / VPI 7372) (Clostridium thermocellum) protein is Glucan endo-1,3-beta-D-glucosidase.